We begin with the raw amino-acid sequence, 397 residues long: Succinate--CoA ligase [ADP-forming] subunit beta (397 aa).

Residues 9–254 (KALLKGYGAP…ETEEDAKEIE (246 aa)) form the ATP-grasp domain. Residues Lys-46, 53–55 (GRG), Glu-109, Ala-112, and Glu-117 each bind ATP. Mg(2+) contacts are provided by Asn-209 and Asp-223. Substrate-binding positions include Asn-274 and 331 to 333 (GIM).

This sequence belongs to the succinate/malate CoA ligase beta subunit family. Heterotetramer of two alpha and two beta subunits. Mg(2+) serves as cofactor.

The catalysed reaction is succinate + ATP + CoA = succinyl-CoA + ADP + phosphate. It carries out the reaction GTP + succinate + CoA = succinyl-CoA + GDP + phosphate. Its pathway is carbohydrate metabolism; tricarboxylic acid cycle; succinate from succinyl-CoA (ligase route): step 1/1. In terms of biological role, succinyl-CoA synthetase functions in the citric acid cycle (TCA), coupling the hydrolysis of succinyl-CoA to the synthesis of either ATP or GTP and thus represents the only step of substrate-level phosphorylation in the TCA. The beta subunit provides nucleotide specificity of the enzyme and binds the substrate succinate, while the binding sites for coenzyme A and phosphate are found in the alpha subunit. This chain is Succinate--CoA ligase [ADP-forming] subunit beta, found in Rhizobium johnstonii (strain DSM 114642 / LMG 32736 / 3841) (Rhizobium leguminosarum bv. viciae).